Here is a 115-residue protein sequence, read N- to C-terminus: uncharacterized protein (115 aa).

A disordered region spans residues 9-30 (EGLRERGASGKNEQKKKKKEKI).

This is an uncharacterized protein from Saccharomyces cerevisiae (strain ATCC 204508 / S288c) (Baker's yeast).